The chain runs to 118 residues: Elongin-B (118 aa).

Met1 is subject to N-acetylmethionine. The Ubiquitin-like domain occupies Met1–Thr66. The residue at position 84 (Thr84) is a Phosphothreonine. The interval Pro92 to Gln118 is disordered. Polar residues predominate over residues Asp107–Gln118. Phosphoserine is present on residues Ser108 and Ser111.

Belongs to the Elongin B family. As to quaternary structure, heterotrimer of an A (ELOA, ELOA2 or ELOA3P), ELOB and ELOC subunit. The elongin BC complex interacts with EPOP; leading to recruit the elongin BC complex to Polycomb group (PcG) target genes, thereby restricting excessive activity of the PRC2/EED-EZH2 complex. Component of multiple cullin-RING E3 ubiquitin-protein ligase complexes composed of Elongin BC (ELOB and ELOC), a cullin (either CUL2 or CUL5), a catalytic subunit (either RBX1 or RNF7/RBX2), as well as a substrate adapter protein that can be either ASB2, ASB9, ASB11, KLHDC2, KLHDC3, KLHDC10, APPBP2, FEM1A, FEM1B, FEM1C, LRR1, PCMTD1, SOCS1, SOCS2, SOCS5, SPSB1, SPSB3, ELOA, VHL, WSB1 or RAB40C. As part of the Elongin BC E3 ubiquitin ligase complex; interacts with NRBP1. May also interact with DCUN1D1, DCUN1D2, DCUN1D3 and DCUN1D5. May form oligomers as a KLHDC2/KLHDC3-ELOB-ELOC complex; this interaction is autoinhibitory for the E3 ligase complex as the substrate-binding site of KLHDC2/KLHDC3 is blocked in the oligomer. (Microbial infection) Following infection by HIV-1 virus, component of a cullin-5-RING E3 ubiquitin-protein ligase complex (ECS complex) hijacked by the HIV-1 Vif protein. In terms of assembly, (Microbial infection) Substrate adapter protein can be a viral protein such as HIV Vif. As to quaternary structure, (Microbial infection) Interacts with molluscum contagiosum virus MC132. (Microbial infection) Interacts with herpes virus 8 virus protein LANA1.

The protein localises to the nucleus. Its pathway is protein modification; protein ubiquitination. SIII, also known as elongin, is a general transcription elongation factor that increases the RNA polymerase II transcription elongation past template-encoded arresting sites. Subunit A is transcriptionally active and its transcription activity is strongly enhanced by binding to the dimeric complex of the SIII regulatory subunits B and C (elongin BC complex). In embryonic stem cells, the elongin BC complex is recruited by EPOP to Polycomb group (PcG) target genes in order generate genomic region that display both active and repressive chromatin properties, an important feature of pluripotent stem cells. Functionally, core component of multiple cullin-2 and cullin-5-RING E3 ubiquitin-protein ligase complexes (ECS complexes), which mediate the ubiquitination of target proteins. By binding to BC-box motifs it seems to link target recruitment subunits, like VHL and members of the SOCS box family, to Cullin/RBX1 modules that activate E2 ubiquitination enzymes. Component the von Hippel-Lindau ubiquitination complex CBC(VHL). A number of ECS complexes (containing either KLHDC2, KLHDC3, KLHDC10, APPBP2, FEM1A, FEM1B or FEM1C as substrate-recognition component) are part of the DesCEND (destruction via C-end degrons) pathway, which recognizes a C-degron located at the extreme C terminus of target proteins, leading to their ubiquitination and degradation. The ECS(ASB9) complex mediates ubiquitination and degradation of CKB. As part of a multisubunit ubiquitin ligase complex, polyubiquitinates monoubiquitinated POLR2A. ECS(LRR1) ubiquitinates MCM7 and promotes CMG replisome disassembly by VCP and chromatin extraction during S-phase. As part of the ECS(RAB40C) complex, mediates ANKRD28 ubiquitination and degradation, thereby inhibiting protein phosphatase 6 (PP6) complex activity and focal adhesion assembly during cell migration. In terms of biological role, (Microbial infection) Following infection by HIV-1 virus, component of a cullin-5-RING E3 ubiquitin-protein ligase complex (ECS complex) hijacked by the HIV-1 Vif protein, which catalyzes ubiquitination and degradation of APOBEC3F and APOBEC3G. The complex can also ubiquitinate APOBEC3H to some extent. This chain is Elongin-B, found in Homo sapiens (Human).